Consider the following 344-residue polypeptide: MASSRVDTINLRIWLVSIICAALSFINVTVYLIAINFPNLGFPCAYFEINDLKAVNLSANNQIYQMTHQLYINPVQIICYVLIMAMLFLLIIIYYIVCCAKVFSSNKTSNVNQTTRDITWMGDTSSCFQFILIMDTFQLFVTALSFRLVALGAFAYCIFFVCFTTFNVTLITQFQSADKSFFAFQKIHPNLKGTVQFKTVVINLTELMLGYSTMFLGITTCLGVGNSIYIRSITVAYSSINTFLVMACIYSIVIEAVLVRYVKPLFGYYVGMFCGAVGLSFPILQYETFFESEWSTGLIINLAVIAIISIGFIICRLVRYLVKKKRRYKQLVNTESSSLMDENE.

Residues 1-12 (MASSRVDTINLR) are Intravirion-facing. Residues 13–33 (IWLVSIICAALSFINVTVYLI) form a helical membrane-spanning segment. Residues 34–76 (AINFPNLGFPCAYFEINDLKAVNLSANNQIYQMTHQLYINPVQ) lie on the Virion surface side of the membrane. A helical membrane pass occupies residues 77 to 97 (IICYVLIMAMLFLLIIIYYIV). The Intravirion segment spans residues 98 to 125 (CCAKVFSSNKTSNVNQTTRDITWMGDTS). The helical transmembrane segment at 126-146 (SCFQFILIMDTFQLFVTALSF) threads the bilayer. A topological domain (virion surface) is located at residue Arg147. The helical transmembrane segment at 148–168 (LVALGAFAYCIFFVCFTTFNV) threads the bilayer. Topologically, residues 169-203 (TLITQFQSADKSFFAFQKIHPNLKGTVQFKTVVIN) are intravirion. Residues 204–224 (LTELMLGYSTMFLGITTCLGV) form a helical membrane-spanning segment. Topologically, residues 225 to 238 (GNSIYIRSITVAYS) are virion surface. The chain crosses the membrane as a helical span at residues 239-259 (SINTFLVMACIYSIVIEAVLV). Over 260–263 (RYVK) the chain is Intravirion. The chain crosses the membrane as a helical span at residues 264 to 284 (PLFGYYVGMFCGAVGLSFPIL). The Virion surface portion of the chain corresponds to 285-293 (QYETFFESE). A helical membrane pass occupies residues 294 to 314 (WSTGLIINLAVIAIISIGFII). Topologically, residues 315-344 (CRLVRYLVKKKRRYKQLVNTESSSLMDENE) are intravirion.

This sequence belongs to the herpesviridae glycoprotein M family. As to quaternary structure, interacts (via N-terminus) with gN (via N-terminus). The gM-gN heterodimer forms the gCII complex.

The protein localises to the virion membrane. The protein resides in the host Golgi apparatus. It localises to the host trans-Golgi network. It is found in the host endosome membrane. Its subcellular location is the host nucleus inner membrane. Functionally, envelope glycoprotein important for virion assembly and egress. Plays a role in the correct incorporation of gH-gL into virion membrane. Directs the glycoprotein N (gN) to the host trans-Golgi network. This Homo sapiens (Human) protein is Envelope glycoprotein M.